The chain runs to 330 residues: Cyclin-dependent kinase 7 (330 aa).

Positions 5–289 (YDTIKHLGEG…CTQSLQMEYF (285 aa)) constitute a Protein kinase domain. Residues 11-19 (LGEGQFANV) and Lys34 each bind ATP. The Proton acceptor role is filled by Asp130. Phosphothreonine is present on Thr163. The interval 305–330 (KKQQPQKRSRRLDDDGTRPVRRLNFD) is disordered. Positions 315-330 (RLDDDGTRPVRRLNFD) are enriched in basic and acidic residues.

The protein belongs to the protein kinase superfamily. CMGC Ser/Thr protein kinase family. CDC2/CDKX subfamily. In terms of assembly, catalytic component which, in association with cyclin H (cyh-1) and mat1, is likely to form the CAK complex.

The catalysed reaction is L-seryl-[protein] + ATP = O-phospho-L-seryl-[protein] + ADP + H(+). It carries out the reaction L-threonyl-[protein] + ATP = O-phospho-L-threonyl-[protein] + ADP + H(+). It catalyses the reaction [DNA-directed RNA polymerase] + ATP = phospho-[DNA-directed RNA polymerase] + ADP + H(+). Its function is as follows. Serine/threonine kinase involved in cell cycle control and in RNA polymerase II-mediated RNA transcription. Required for maintaining chromosome ploidy. May phosphorylate the large subunit of RNA polymerase II, ama-1. The sequence is that of Cyclin-dependent kinase 7 from Caenorhabditis elegans.